A 477-amino-acid chain; its full sequence is MDFESVIGLEVHAELSTKTKIYCGCTTEFGGKPNTHVCPVCLGLPGSLPQLNKKVVDYAIKAGLALNCEINKSSRLDRKNYFYPDCPKNYQITQDELPICKNGYIEIELENGEKKRVGIERIHIEEDAGKLLHTKAGTLVDFNRAGVPLIEIVSRPDMSSPEEASQYLQKLRSILASIEVSDCKMEEGSLRCDANISVKPKGDTKLGVRAEIKNMNSFKSLEKAVAYETKRHIELIQKGEKLQQETRRWDEANNITIAMRSKEAANDYRYFPEGDSVAITINDKYIDEIRATIPELPHEKAERFVEEFKIPKYDASVLTLTMEMANFFEETAKLSGDAKASSNWLMGDISRLLNEQNMAVEELKFNPTQLSELIKLISSGTISNNIGKKVVEEMFNTGKSPKVIVEEKGLVQNNDEGAILEVVKRIIDENPQSIEDYRNGKNRVLGFLVGLVMKETRGKANPQIVNKLINEEVNKLA.

It belongs to the GatB/GatE family. GatB subfamily. Heterotrimer of A, B and C subunits.

The catalysed reaction is L-glutamyl-tRNA(Gln) + L-glutamine + ATP + H2O = L-glutaminyl-tRNA(Gln) + L-glutamate + ADP + phosphate + H(+). The enzyme catalyses L-aspartyl-tRNA(Asn) + L-glutamine + ATP + H2O = L-asparaginyl-tRNA(Asn) + L-glutamate + ADP + phosphate + 2 H(+). Allows the formation of correctly charged Asn-tRNA(Asn) or Gln-tRNA(Gln) through the transamidation of misacylated Asp-tRNA(Asn) or Glu-tRNA(Gln) in organisms which lack either or both of asparaginyl-tRNA or glutaminyl-tRNA synthetases. The reaction takes place in the presence of glutamine and ATP through an activated phospho-Asp-tRNA(Asn) or phospho-Glu-tRNA(Gln). The protein is Aspartyl/glutamyl-tRNA(Asn/Gln) amidotransferase subunit B of Clostridium tetani (strain Massachusetts / E88).